A 353-amino-acid polypeptide reads, in one-letter code: Glycerol-3-phosphate dehydrogenase [NAD(+)], cytoplasmic (353 aa).

Alanine 2 is modified (blocked amino end (Ala)). NAD(+)-binding positions include 11 to 16, phenylalanine 98, lysine 121, and alanine 155; that span reads GSGNWG. Residue lysine 121 participates in substrate binding. Catalysis depends on lysine 206, which acts as the Proton acceptor. NAD(+) is bound by residues arginine 270 and glutamine 299. 270-271 contributes to the substrate binding site; sequence RN.

This sequence belongs to the NAD-dependent glycerol-3-phosphate dehydrogenase family. Homodimer.

The protein localises to the cytoplasm. The catalysed reaction is sn-glycerol 3-phosphate + NAD(+) = dihydroxyacetone phosphate + NADH + H(+). The protein operates within phospholipid metabolism; alpha-glycerophosphate cycle. This is Glycerol-3-phosphate dehydrogenase [NAD(+)], cytoplasmic from Drosophila virilis (Fruit fly).